A 376-amino-acid chain; its full sequence is Rhodopsin (376 aa).

Residues 1–51 lie on the Extracellular side of the membrane; that stretch reads MSLINEPSYSAYSWGGQGGYGNQTVVDKVLPEMLHLIDPHWYQFPPMNPLW. N-linked (GlcNAc...) asparagine glycosylation occurs at Asn22. The helical transmembrane segment at 52-76 threads the bilayer; it reads HGLLGFVIGCLGFVSVVGNGMVIYI. The Cytoplasmic segment spans residues 77-88; it reads FSTTKGLRTPSN. The chain crosses the membrane as a helical span at residues 89–113; it reads LLVVNLAFSDFLMMLSMSPPMVINC. The Extracellular segment spans residues 114–128; that stretch reads YYETWVLGPFMCELY. Cys125 and Cys202 form a disulfide bridge. The chain crosses the membrane as a helical span at residues 129 to 148; that stretch reads ALLGSLFGCGSIWTMVMIAL. The Cytoplasmic portion of the chain corresponds to 149–167; that stretch reads DRYNVIVKGLAAKPMTNKT. A helical transmembrane segment spans residues 168 to 191; that stretch reads AMLRILGIWAMSIAWTVFPLFGWN. The Extracellular portion of the chain corresponds to 192 to 215; sequence RYVPEGNMTACGTDYLNKEWVSRS. A glycan (N-linked (GlcNAc...) asparagine) is linked at Asn198. A helical membrane pass occupies residues 216-243; sequence YILVYSVFVYFLPLATIIYSYWFIVQAV. The Cytoplasmic portion of the chain corresponds to 244–278; that stretch reads SAHEKQMREQAKKMNVASLRSAENANTSAECKLAK. A helical membrane pass occupies residues 279–302; sequence VALMTISLWFFAWTPYLVTDFSGI. Topologically, residues 303 to 309 are extracellular; the sequence is FEWGKIS. A helical transmembrane segment spans residues 310–334; the sequence is PLATIWCSLFAKANAVYNPIVYGIS. Lys321 carries the N6-(retinylidene)lysine modification. The Cytoplasmic segment spans residues 335 to 376; it reads HPKYRAALNKKFPSLACASEPDDTASQASGATTVSDEKSASA. Positions 353–376 are disordered; it reads SEPDDTASQASGATTVSDEKSASA. The span at 358 to 368 shows a compositional bias: polar residues; it reads TASQASGATTV.

This sequence belongs to the G-protein coupled receptor 1 family. Opsin subfamily. Phosphorylated on some or all of the serine and threonine residues present in the C-terminal region.

It is found in the membrane. Visual pigments are the light-absorbing molecules that mediate vision. They consist of an apoprotein, opsin, covalently linked to cis-retinal. The polypeptide is Rhodopsin (Sphodromantis sp. (Mantis)).